We begin with the raw amino-acid sequence, 342 residues long: tRNA N6-adenosine threonylcarbamoyltransferase (342 aa).

Positions 111 and 115 each coordinate Fe cation. Residues 134 to 138 (LVSGG), Asp-167, Gly-180, and Asn-272 each bind substrate. Asp-300 provides a ligand contact to Fe cation.

The protein belongs to the KAE1 / TsaD family. Requires Fe(2+) as cofactor.

The protein resides in the cytoplasm. The enzyme catalyses L-threonylcarbamoyladenylate + adenosine(37) in tRNA = N(6)-L-threonylcarbamoyladenosine(37) in tRNA + AMP + H(+). In terms of biological role, required for the formation of a threonylcarbamoyl group on adenosine at position 37 (t(6)A37) in tRNAs that read codons beginning with adenine. Is involved in the transfer of the threonylcarbamoyl moiety of threonylcarbamoyl-AMP (TC-AMP) to the N6 group of A37, together with TsaE and TsaB. TsaD likely plays a direct catalytic role in this reaction. In Aromatoleum aromaticum (strain DSM 19018 / LMG 30748 / EbN1) (Azoarcus sp. (strain EbN1)), this protein is tRNA N6-adenosine threonylcarbamoyltransferase.